A 396-amino-acid polypeptide reads, in one-letter code: Interleukin enhancer-binding factor 2 homolog (396 aa).

Positions 22–379 constitute a DZF domain; that stretch reads KTFVPRHPFD…KKEGDLEEDI (358 aa). Residues 367 to 396 are disordered; it reads PTDKKEGDLEEDIDMIENENEEEGSDDGAE. Over residues 374–396 the composition is skewed to acidic residues; sequence DLEEDIDMIENENEEEGSDDGAE.

It is found in the nucleus. Its function is as follows. May regulate transcription of undefined genes. This is Interleukin enhancer-binding factor 2 homolog from Drosophila melanogaster (Fruit fly).